The primary structure comprises 361 residues: Glutamine synthetase (361 aa).

The 81-residue stretch at 23-103 (CQAMYIWVDG…VLCETYKYNK (81 aa)) folds into the GS beta-grasp domain. The GS catalytic domain occupies 110 to 361 (QRWKCMEVMT…LVRTICLNEQ (252 aa)). E131 lines the ATP pocket. E131, E133, and E200 together coordinate Mn(2+). ATP is bound at residue 200–205 (EFQVGP). 243-244 (DW) serves as a coordination point for L-glutamate. H250 serves as a coordination point for Mn(2+). ATP-binding positions include 252–254 (NFS), R316, and R321. R316 is an L-glutamate binding site. 333–335 (YLE) provides a ligand contact to ADP. E335 contacts Mn(2+). Residue R337 coordinates L-glutamate.

Belongs to the glutamine synthetase family. Mg(2+) is required as a cofactor. The cofactor is Mn(2+).

It is found in the cytoplasm. The protein localises to the cytosol. It localises to the microsome. Its subcellular location is the mitochondrion. The enzyme catalyses L-glutamate + NH4(+) + ATP = L-glutamine + ADP + phosphate + H(+). In terms of biological role, glutamine synthetase that catalyzes the ATP-dependent conversion of glutamate and ammonia to glutamine. The sequence is that of Glutamine synthetase from Panulirus argus (Caribbean spiny lobster).